A 406-amino-acid chain; its full sequence is MKLTTIPNEFKEAAPVIREINAQGFEAYFVGGSVRDALLNKPIHDVDIATSAYPEEIKQIFKRTVDVGIEHGTVLVLMEDQQYEVTTFRTESTYQDFRRPDEVTFVRSLKEDLKRRDFTINALALDSTGEIIDLFDGIEDLTNQTIRAVGNPHERFHEDALRMMRGLRFASQLDFKIEEKTLAAIAEFHPLLEKISVERITIEFVKMLLGVNRQGGLAPFIETECYQYCPKLREQGAGLFRLMDLPARQIETEAEAWTLLIQSLNLPEAEIRSFLKAWKLSNQLIQNVSQLVRGLRFRLSNDWQPMMLYELGEESAVLVERLLYYYQQESQVQVTKELVKALPIHQRHELAITGKDLLAVLEETPGKWLGELIAEIEQHVVEGSLENKQEVLLSFAKKQRSKGEKA.

The ATP site is built by glycine 32 and arginine 35. CTP contacts are provided by glycine 32 and arginine 35. 2 residues coordinate Mg(2+): aspartate 45 and aspartate 47. Residues arginine 116, aspartate 159, arginine 162, arginine 165, and arginine 168 each coordinate ATP. Residues arginine 116, aspartate 159, arginine 162, arginine 165, and arginine 168 each coordinate CTP.

This sequence belongs to the tRNA nucleotidyltransferase/poly(A) polymerase family. Bacterial CCA-adding enzyme type 3 subfamily. Homodimer. It depends on Mg(2+) as a cofactor.

The catalysed reaction is a tRNA precursor + 2 CTP + ATP = a tRNA with a 3' CCA end + 3 diphosphate. The enzyme catalyses a tRNA with a 3' CCA end + 2 CTP + ATP = a tRNA with a 3' CCACCA end + 3 diphosphate. Catalyzes the addition and repair of the essential 3'-terminal CCA sequence in tRNAs without using a nucleic acid template. Adds these three nucleotides in the order of C, C, and A to the tRNA nucleotide-73, using CTP and ATP as substrates and producing inorganic pyrophosphate. tRNA 3'-terminal CCA addition is required both for tRNA processing and repair. Also involved in tRNA surveillance by mediating tandem CCA addition to generate a CCACCA at the 3' terminus of unstable tRNAs. While stable tRNAs receive only 3'-terminal CCA, unstable tRNAs are marked with CCACCA and rapidly degraded. The polypeptide is CCA-adding enzyme (Enterococcus faecalis (strain ATCC 700802 / V583)).